Here is a 698-residue protein sequence, read N- to C-terminus: Elongation factor G 1 (698 aa).

A tr-type G domain is found at 8–290 (ERYRNIGICA…AVIEFLPSPT (283 aa)). GTP is bound by residues 17 to 24 (AHVDAGKT), 88 to 92 (DTPGH), and 142 to 145 (NKMD).

The protein belongs to the TRAFAC class translation factor GTPase superfamily. Classic translation factor GTPase family. EF-G/EF-2 subfamily.

The protein localises to the cytoplasm. Functionally, catalyzes the GTP-dependent ribosomal translocation step during translation elongation. During this step, the ribosome changes from the pre-translocational (PRE) to the post-translocational (POST) state as the newly formed A-site-bound peptidyl-tRNA and P-site-bound deacylated tRNA move to the P and E sites, respectively. Catalyzes the coordinated movement of the two tRNA molecules, the mRNA and conformational changes in the ribosome. The chain is Elongation factor G 1 from Vibrio cholerae serotype O1 (strain ATCC 39315 / El Tor Inaba N16961).